The sequence spans 320 residues: Holliday junction branch migration complex subunit RuvB (320 aa).

The interval 1–172 (MTANVCLDES…FGIISRLEYY (172 aa)) is large ATPase domain (RuvB-L). ATP contacts are provided by residues Arg12, Gly53, Lys56, Thr57, Thr58, 119–121 (EDF), Arg162, Tyr172, and Arg209. Thr57 contacts Mg(2+). Residues 173–243 (TPADLARIVA…LASEALGRME (71 aa)) form a small ATPAse domain (RuvB-S) region. Residues 246-320 (ESGLDQMDRK…KAYRHLNLLG (75 aa)) are head domain (RuvB-H). The DNA site is built by Arg301 and Arg306.

Belongs to the RuvB family. Homohexamer. Forms an RuvA(8)-RuvB(12)-Holliday junction (HJ) complex. HJ DNA is sandwiched between 2 RuvA tetramers; dsDNA enters through RuvA and exits via RuvB. An RuvB hexamer assembles on each DNA strand where it exits the tetramer. Each RuvB hexamer is contacted by two RuvA subunits (via domain III) on 2 adjacent RuvB subunits; this complex drives branch migration. In the full resolvosome a probable DNA-RuvA(4)-RuvB(12)-RuvC(2) complex forms which resolves the HJ.

It localises to the cytoplasm. The enzyme catalyses ATP + H2O = ADP + phosphate + H(+). The RuvA-RuvB-RuvC complex processes Holliday junction (HJ) DNA during genetic recombination and DNA repair, while the RuvA-RuvB complex plays an important role in the rescue of blocked DNA replication forks via replication fork reversal (RFR). RuvA specifically binds to HJ cruciform DNA, conferring on it an open structure. The RuvB hexamer acts as an ATP-dependent pump, pulling dsDNA into and through the RuvAB complex. RuvB forms 2 homohexamers on either side of HJ DNA bound by 1 or 2 RuvA tetramers; 4 subunits per hexamer contact DNA at a time. Coordinated motions by a converter formed by DNA-disengaged RuvB subunits stimulates ATP hydrolysis and nucleotide exchange. Immobilization of the converter enables RuvB to convert the ATP-contained energy into a lever motion, pulling 2 nucleotides of DNA out of the RuvA tetramer per ATP hydrolyzed, thus driving DNA branch migration. The RuvB motors rotate together with the DNA substrate, which together with the progressing nucleotide cycle form the mechanistic basis for DNA recombination by continuous HJ branch migration. Branch migration allows RuvC to scan DNA until it finds its consensus sequence, where it cleaves and resolves cruciform DNA. This Nitratidesulfovibrio vulgaris (strain ATCC 29579 / DSM 644 / CCUG 34227 / NCIMB 8303 / VKM B-1760 / Hildenborough) (Desulfovibrio vulgaris) protein is Holliday junction branch migration complex subunit RuvB.